We begin with the raw amino-acid sequence, 449 residues long: Na(+)/H(+) antiporter NhaA 2 (449 aa).

Transmembrane regions (helical) follow at residues 32–52 (IEATSGAVLLLATVVALTLSN), 87–107 (GLMTLFFFIVALEIKREVVLG), 114–134 (MVALSVVAAAGGMLVPMGLYL), 145–165 (GWGVVMPTDTAFVIGCLALLG), 174–194 (VFLLSLAVVDDLAAILVVAVG), 202–222 (TALALGAVGLVIIRGMALLGV), 233–253 (AIIWLAVNASGIHATIVGVIL), 318–338 (WVAFGVMPLFALANAGVPITI), 347–367 (LAVMAGFVLGKPIGVTAFAWL), 382–402 (WGGLVGGALLTGIGFTMALFI), and 417–437 (LGILAASVVSSVAGLTLLCAL).

The protein belongs to the NhaA Na(+)/H(+) (TC 2.A.33) antiporter family.

The protein localises to the cell inner membrane. The enzyme catalyses Na(+)(in) + 2 H(+)(out) = Na(+)(out) + 2 H(+)(in). Na(+)/H(+) antiporter that extrudes sodium in exchange for external protons. The sequence is that of Na(+)/H(+) antiporter NhaA 2 from Acidiphilium cryptum (strain JF-5).